A 333-amino-acid chain; its full sequence is Probable G-protein coupled receptor 33 (333 aa).

At 1–30 (MDLINSTDYLINASTLVRNSTQFLAPASKM) the chain is on the extracellular side. 3 N-linked (GlcNAc...) asparagine glycosylation sites follow: asparagine 5, asparagine 12, and asparagine 19. The helical transmembrane segment at 31-53 (IIALSLYISSIIGTITNGLYLWV) threads the bilayer. Residues 54-64 (LRFKMKQTVNT) lie on the Cytoplasmic side of the membrane. The chain crosses the membrane as a helical span at residues 65 to 86 (LLFFHLILSYFISTMILPFMAT). The Extracellular portion of the chain corresponds to 87–103 (SQLQDNHWNFGTALCKV). An intrachain disulfide couples cysteine 101 to cysteine 179. Residues 104–124 (FNGTLSLGMFTSVFFLSAIGL) form a helical membrane-spanning segment. Residues 125-143 (DRYLLTLHPVWSQQHRTPR) lie on the Cytoplasmic side of the membrane. Residues 144-165 (WASSIVLGVWISAAALSIPYLI) form a helical membrane-spanning segment. At 166–209 (FRQTHHDRKGKVTCQNNYAVSTNWESKEMQALRQWIHVACFISR) the chain is on the extracellular side. Residues 210–230 (FLLGFLLPFFIIIFCYERVAS) form a helical membrane-spanning segment. The Cytoplasmic segment spans residues 231 to 246 (KVKERSLFKSSKPFKV). Residues 247 to 268 (MMTAIISFFVCWMPYHIHQGLL) traverse the membrane as a helical segment. Residues 269–283 (LTMNQSLLLELTLIL) are Extracellular-facing. N-linked (GlcNAc...) asparagine glycosylation is present at asparagine 272. A helical membrane pass occupies residues 284–303 (TVLTTSFNTIFSPTLYLFVG). Residues 304–333 (ENFKKVFKKSILALFESTFSEDSSVERTQT) lie on the Cytoplasmic side of the membrane.

Belongs to the G-protein coupled receptor 1 family.

The protein localises to the cell membrane. Its function is as follows. Orphan receptor; could be a chemoattractant receptor. This Pan paniscus (Pygmy chimpanzee) protein is Probable G-protein coupled receptor 33 (GPR33).